Reading from the N-terminus, the 417-residue chain is Gamma-glutamyl phosphate reductase (417 aa).

The protein belongs to the gamma-glutamyl phosphate reductase family.

It is found in the cytoplasm. It carries out the reaction L-glutamate 5-semialdehyde + phosphate + NADP(+) = L-glutamyl 5-phosphate + NADPH + H(+). It functions in the pathway amino-acid biosynthesis; L-proline biosynthesis; L-glutamate 5-semialdehyde from L-glutamate: step 2/2. In terms of biological role, catalyzes the NADPH-dependent reduction of L-glutamate 5-phosphate into L-glutamate 5-semialdehyde and phosphate. The product spontaneously undergoes cyclization to form 1-pyrroline-5-carboxylate. This Idiomarina loihiensis (strain ATCC BAA-735 / DSM 15497 / L2-TR) protein is Gamma-glutamyl phosphate reductase.